A 142-amino-acid polypeptide reads, in one-letter code: Large ribosomal subunit protein uL11 (142 aa).

It belongs to the universal ribosomal protein uL11 family. In terms of assembly, part of the ribosomal stalk of the 50S ribosomal subunit. Interacts with L10 and the large rRNA to form the base of the stalk. L10 forms an elongated spine to which L12 dimers bind in a sequential fashion forming a multimeric L10(L12)X complex. In terms of processing, one or more lysine residues are methylated.

Forms part of the ribosomal stalk which helps the ribosome interact with GTP-bound translation factors. The chain is Large ribosomal subunit protein uL11 from Mycoplasma mycoides subsp. mycoides SC (strain CCUG 32753 / NCTC 10114 / PG1).